Consider the following 156-residue polypeptide: Transcription elongation factor GreA (156 aa).

The stretch at 2–27 forms a coiled coil; the sequence is EKTFPMTKEGLDKLKAELENLKLVKR.

It belongs to the GreA/GreB family.

In terms of biological role, necessary for efficient RNA polymerase transcription elongation past template-encoded arresting sites. The arresting sites in DNA have the property of trapping a certain fraction of elongating RNA polymerases that pass through, resulting in locked ternary complexes. Cleavage of the nascent transcript by cleavage factors such as GreA or GreB allows the resumption of elongation from the new 3'terminus. GreA releases sequences of 2 to 3 nucleotides. This is Transcription elongation factor GreA from Lactococcus lactis subsp. cremoris (strain SK11).